The sequence spans 92 residues: Small ribosomal subunit protein uS19 (92 aa).

The protein belongs to the universal ribosomal protein uS19 family.

Protein S19 forms a complex with S13 that binds strongly to the 16S ribosomal RNA. This is Small ribosomal subunit protein uS19 from Beijerinckia indica subsp. indica (strain ATCC 9039 / DSM 1715 / NCIMB 8712).